The primary structure comprises 218 residues: MDKSESTSAGRNRRRRPRRGSRSAPSSADANFRVLSQQLSRLNKTLAAGRPTINHPTFVGSERCKPGYTFTSITLKPPKIDRGSYYGKRLLLPDSVTEYDKKLVSRIQIRVNPLPKFDSTVWVTVRKVPASSDLSVAAISAMFADGASPVLVYQYAAFGVQANNKLLYDLSAMRADIGDMRKYAVLVYSKDDALETDELVLHVDIEHQRIPTSRVLPV.

N-acetylmethionine; by host is present on M1. Residues 1–28 (MDKSESTSAGRNRRRRPRRGSRSAPSSA) are disordered. The span at 11–21 (RNRRRRPRRGS) shows a compositional bias: basic residues.

The protein belongs to the cucumovirus capsid protein family.

It is found in the virion. Functionally, capsid protein. Probably binds RNA and plays a role in packaging. The sequence is that of Capsid protein from Cucumis sativus (Cucumber).